Here is a 950-residue protein sequence, read N- to C-terminus: Translation initiation factor IF-2 (950 aa).

Disordered stretches follow at residues 69 to 92 (KTKTVPETAKSKQEDHPRTFAGKA) and 128 to 352 (KPKV…SNVP). 5 stretches are compositionally biased toward basic and acidic residues: residues 77–86 (AKSKQEDHPR), 128–158 (KPKVAEPVKKSEPKAAAKAEETKVEKVEAKA), 165–186 (AEVKTENVADKKEPVVTEEKKK), 200–234 (KRAEDIKKEQAAARPEKKKFDKNRNDRNNRNDNRR), and 291–312 (NRRDRDRKKTDSNRDNTKDGNR). Composition is skewed to polar residues over residues 322–336 (NRNQVRNARNSNWNQ) and 343–352 (YQNNQSSNVP). A tr-type G domain is found at 448 to 619 (ERPAVVTIMG…LLVAEVQELK (172 aa)). The interval 457–464 (GHVDHGKT) is G1. Residue 457-464 (GHVDHGKT) coordinates GTP. Residues 482 to 486 (GITQH) form a G2 region. A G3 region spans residues 503-506 (DTPG). Residues 503-507 (DTPGH) and 557-560 (NKID) each bind GTP. Positions 557–560 (NKID) are G4. Residues 595–597 (SAK) are G5.

Belongs to the TRAFAC class translation factor GTPase superfamily. Classic translation factor GTPase family. IF-2 subfamily.

The protein resides in the cytoplasm. In terms of biological role, one of the essential components for the initiation of protein synthesis. Protects formylmethionyl-tRNA from spontaneous hydrolysis and promotes its binding to the 30S ribosomal subunits. Also involved in the hydrolysis of GTP during the formation of the 70S ribosomal complex. The chain is Translation initiation factor IF-2 from Lactococcus lactis subsp. cremoris (strain SK11).